Reading from the N-terminus, the 246-residue chain is Cell division protein ZapD (246 aa).

It belongs to the ZapD family. As to quaternary structure, interacts with FtsZ.

Its subcellular location is the cytoplasm. Functionally, cell division factor that enhances FtsZ-ring assembly. Directly interacts with FtsZ and promotes bundling of FtsZ protofilaments, with a reduction in FtsZ GTPase activity. The sequence is that of Cell division protein ZapD from Vibrio parahaemolyticus serotype O3:K6 (strain RIMD 2210633).